Here is a 541-residue protein sequence, read N- to C-terminus: Nuclear receptor subfamily 5 group A member 2 (541 aa).

Positions 1–10 (MSSNSDTGDL) are enriched in polar residues. Residues 1-35 (MSSNSDTGDLQESLKHGLTPIGAGLPDRHGSPIPA) are disordered. A DNA-binding region (nuclear receptor) is located at residues 83–154 (EELCPVCGDK…KCLSVGMKLE (72 aa)). 8 residues coordinate Zn(2+): Cys-86, Cys-89, Cys-103, Cys-106, Cys-122, Cys-128, Cys-138, and Cys-141. 2 consecutive NR C4-type zinc fingers follow at residues 86–106 (CPVCGDKVSGYHYGLLTCESC) and 122–146 (CIENQNCQIDKTQRKRCPYCRFQKC). The C-terminal extension (CTE) stretch occupies residues 152–167 (KLEAVRADRMRGGRNK). Residues 168-187 (FGPMYKRDRALKQQKKALIR) carry the FTZ-F1 box motif. Lys-270 participates in a covalent cross-link: Glycyl lysine isopeptide (Lys-Gly) (interchain with G-Cter in SUMO1). An NR LBD domain is found at 300–539 (SIPHLILELL…NLLIEMLHAK (240 aa)). Residues 421 to 424 (GATL), Tyr-516, and Lys-520 each bind a phospholipid derivative. Residues 528-539 (YNNLLIEMLHAK) are AF-2.

This sequence belongs to the nuclear hormone receptor family. NR5 subfamily. Monomer; Binds DNA as a monomer. Interacts with nuclear receptor corepressors NR0B1 and NR0B2; repressing NR5A2 nuclear receptor activity. Interacts with nuclear receptor coactivators CTNNB1, PPARGC1A and NCOA2; interaction takes place following ligand-binding and promotes target gene activation. Interacts (when sumoylated) with GPS2; interaction with GPS2 onto hepatic acute phase protein promoters prevents N-Cor corepressor complex dissociation. Interacts with HNF1A. Interacts with GRIP1. Post-translationally, sumoylated by SUMO1 at Lys-270 during the hepatic acute phase response, leading to promote interaction with GPS2 and prevent N-Cor corepressor complex dissociation. Abundantly expressed in pancreas, less in liver, very low levels in heart and lung. Expressed in the Hep-G2 cell line. Isoform 1 and isoform 2 seem to be present in fetal and adult liver and Hep-G2 cells.

Its subcellular location is the nucleus. The protein resides in the chromosome. Activated by synthetic agonists RR-RJW100, SR-RJW100, endo sulfamide compound 6N and GSK8470. Orphan nuclear receptor that binds DNA as a monomer to the 5'-TCAAGGCCA-3' sequence and controls expression of target genes: regulates key biological processes, such as early embryonic development, cholesterol and bile acid synthesis pathways, as well as liver and pancreas morphogenesis. Ligand-binding causes conformational change which causes recruitment of coactivators, promoting target gene activation. The specific ligand is unknown, but specific phospholipids, such as phosphatidylethanolamine, phosphatidylserine, dilauroyl phosphatidylcholine and diundecanoyl phosphatidylcholine can act as ligand in vitro. Acts as a pioneer transcription factor, which unwraps target DNA from histones and elicits local opening of closed chromatin. Plays a central role during preimplantation stages of embryonic development. Plays a minor role in zygotic genome activation (ZGA) by regulating a small set of two-cell stage genes. Plays a major role in morula development (2-16 cells embryos) by acting as a master regulator at the 8-cell stage, controlling expression of lineage-specifying transcription factors and genes involved in mitosis, telomere maintenance and DNA repair. Zygotic NR5A2 binds to both closed and open chromatin with other transcription factors, often at SINE B1/Alu repeats DNA elements, promoting chromatin accessibility at nearby regulatory regions. Also involved in the epiblast stage of development and embryonic stem cell pluripotency, by promoting expression of POU5F1/OCT4. Regulates other processes later in development, such as formation of connective tissue in lower jaw and middle ear, neural stem cell differentiation, ovarian follicle development and Sertoli cell differentiation. Involved in exocrine pancreas development and acinar cell differentiation. Acts as an essential transcriptional regulator of lipid metabolism. Key regulator of cholesterol 7-alpha-hydroxylase gene (CYP7A) expression in liver. Also acts as a negative regulator of inflammation in different organs, such as, liver and pancreas. Protects against intestinal inflammation via its ability to regulate glucocorticoid production. Plays an anti-inflammatory role during the hepatic acute phase response by acting as a corepressor: inhibits the hepatic acute phase response by preventing dissociation of the N-Cor corepressor complex. Acts as a regulator of immunity by promoting lymphocyte T-cell development, proliferation and effector functions. Also involved in resolution of endoplasmic reticulum stress in the liver. Functionally, in constrast to isoform 1 and isoform 2, does not induce cholesterol 7-alpha-hydroxylase gene (CYP7A) promoter activity. In terms of biological role, (Microbial infection) Plays a crucial role for hepatitis B virus gene transcription and DNA replication. Mechanistically, synergistically cooperates with HNF1A to up-regulate the activity of one of the critical cis-elements in the hepatitis B virus genome enhancer II (ENII). The chain is Nuclear receptor subfamily 5 group A member 2 from Homo sapiens (Human).